The following is a 61-amino-acid chain: [Thr6]-bradykinyl-Val,Asp (61 aa).

The N-terminal stretch at 1-22 (MSFLKKSLFLVLFLGFVSFSIC) is a signal peptide. Positions 23–50 (EEEKREDEEEENEREENKESEEKRNQEE) are excised as a propeptide. Residues 24-61 (EEKREDEEEENEREENKESEEKRNQEERPPGFTPFRVD) form a disordered region. Over residues 26 to 36 (KREDEEEENER) the composition is skewed to acidic residues. The segment covering 37-52 (EENKESEEKRNQEERP) has biased composition (basic and acidic residues). 4-hydroxyproline; in form [Hyp3,Thr6]-bradykinyl-Val,Asp and [Hyp3,Thr6]-bradykinin is present on Pro-53.

The protein belongs to the frog skin active peptide (FSAP) family. Bradykinin-related peptide subfamily. In terms of tissue distribution, expressed by the skin glands.

It is found in the secreted. Functionally, induces relaxation of rat smooth muscle from tail artery (EC(50)=16.8 nM) and contraction of that from ileum (EC(50)=205 nM), urinary bladder (EC(50)=895 nM) and uterus (EC(50)=60.3 nM). Binds to both bradykinin receptor B1 (BDKRB1) and B2 (BDKRB2). [Hyp3,Thr6]-bradykinin: Induces relaxation of rat smooth muscle from tail artery (EC(50)=56.7 nM) and contraction of that from ileum (EC(50)=588 nM), urinary bladder (EC(50)=4.6 uM) and uterus (EC(50)=3.9 nM). Binds to both bradykinin receptor B1 (BDKRB1) and B2 (BDKRB2). In arterial smooth muscle, the effect via BDKRB1 is stronger, in uterus, ileum and urinary bladder the effect via BDKRB2. In terms of biological role, induces relaxation of rat smooth muscle from tail artery (EC(50)=10.8 nM) and contraction of that from ileum (EC(50)=645 nM), urinary bladder (EC(50)=1.1 uM) and uterus (EC(50)=1.2 uM). Binds to both bradykinin receptor B1 (BDKRB1) and B2 (BDKRB2). Apart from uterus smooth muscle, the effect via BDKRB2 is stronger. Its function is as follows. [Hyp3,Thr6]-bradykinyl-Val,Asp: Induces relaxation of rat smooth muscle from tail artery (EC(50)=3.5 nM) and contraction of that from ileum (EC(50)=223 nM), urinary bladder (EC(50)=1.5 uM) and uterus (EC(50)=356 nM). Binds to both bradykinin receptor B1 (BDKRB1) and B2 (BDKRB2); the effects via BDKRB2 are stronger. This Agalychnis dacnicolor (Giant Mexican leaf frog) protein is [Thr6]-bradykinyl-Val,Asp.